Here is a 191-residue protein sequence, read N- to C-terminus: GDP-mannose pyrophosphatase (191 aa).

Residues Tyr17, 38-40 (KRE), Arg67, and 85-87 (AGL) each bind GDP-alpha-D-mannose. Positions 43 to 180 (DRGNGATILL…EIRDGKTVLL (138 aa)) constitute a Nudix hydrolase domain. Mg(2+)-binding residues include Ala85, Glu100, and Glu104. A Nudix box motif is present at residues 86–106 (GLLDNDEPEVCIRKEAIEETG). GDP-alpha-D-mannose is bound by residues Glu104, Glu127, 150-151 (DE), and Lys176. Position 151 (Glu151) interacts with Mg(2+).

It belongs to the Nudix hydrolase family. NudK subfamily. In terms of assembly, homodimer. Mg(2+) is required as a cofactor.

It carries out the reaction GDP-alpha-D-mannose + H2O = alpha-D-mannose 1-phosphate + GMP + 2 H(+). Its function is as follows. Nucleoside diphosphate sugar hydrolase that hydrolyzes GDP-mannose as its preferred substrate, yielding GMP and mannose-1-phosphate. In Escherichia coli (strain UTI89 / UPEC), this protein is GDP-mannose pyrophosphatase (nudK).